We begin with the raw amino-acid sequence, 438 residues long: Xylose isomerase (438 aa).

Active-site residues include H100 and D103. Residues E231, E267, H270, D295, D306, D308, and D338 each coordinate Mg(2+).

It belongs to the xylose isomerase family. As to quaternary structure, homotetramer. It depends on Mg(2+) as a cofactor.

It localises to the cytoplasm. It catalyses the reaction alpha-D-xylose = alpha-D-xylulofuranose. In Thermoanaerobacter pseudethanolicus (strain ATCC 33223 / 39E) (Clostridium thermohydrosulfuricum), this protein is Xylose isomerase (xylA).